Here is a 510-residue protein sequence, read N- to C-terminus: Probable gamma-aminobutyrate transaminase 3, mitochondrial (510 aa).

The transit peptide at 1-41 (MICRSLLLLRSNAASKASSIVKHVAATGCLPEYSSEAPARY) directs the protein to the mitochondrion. 166-167 (GS) is a pyridoxal 5'-phosphate binding site. Tyr-199 contributes to the substrate binding site. Asp-306 contacts pyridoxal 5'-phosphate. Lys-335 contributes to the substrate binding site. An N6-(pyridoxal phosphate)lysine modification is found at Lys-335.

This sequence belongs to the class-III pyridoxal-phosphate-dependent aminotransferase family.

It localises to the mitochondrion. It catalyses the reaction 4-aminobutanoate + pyruvate = succinate semialdehyde + L-alanine. The catalysed reaction is 4-aminobutanoate + glyoxylate = succinate semialdehyde + glycine. Its function is as follows. Transaminase that degrades gamma-amino butyric acid (GABA). This chain is Probable gamma-aminobutyrate transaminase 3, mitochondrial, found in Oryza sativa subsp. indica (Rice).